The following is an 892-amino-acid chain: Translation initiation factor IF-2 (892 aa).

2 disordered regions span residues 144–176 and 189–298; these read QQRL…QKTE and SNSV…SGAH. Residues 207–219 are compositionally biased toward low complexity; it reads LPRTVRPTPAARP. In terms of domain architecture, tr-type G spans 391–560; the sequence is PRPPVVTIMG…SIQAEVLELK (170 aa). GTP-binding positions include 400-407, 446-450, and 500-503; these read GHVDHGKT, DTPGH, and SKID.

The protein belongs to the TRAFAC class translation factor GTPase superfamily. Classic translation factor GTPase family. IF-2 subfamily.

The protein localises to the cytoplasm. Its function is as follows. One of the essential components for the initiation of protein synthesis. Protects formylmethionyl-tRNA from spontaneous hydrolysis and promotes its binding to the 30S ribosomal subunits. Also involved in the hydrolysis of GTP during the formation of the 70S ribosomal complex. The chain is Translation initiation factor IF-2 from Xylella fastidiosa (strain M12).